The primary structure comprises 136 residues: Protein NrdI (136 aa).

It belongs to the NrdI family.

Functionally, probably involved in ribonucleotide reductase function. The chain is Protein NrdI from Salmonella typhi.